We begin with the raw amino-acid sequence, 337 residues long: Transcription factor HBI1 (337 aa).

The disordered stretch occupies residues 119–180 (VALKNKRKPE…SKGASENQKL (62 aa)). Basic and acidic residues predominate over residues 126-151 (KPEVKTREEQKTEKKIKVEAETESSM). Over residues 152 to 165 (KGKSNMGNTEASSD) the composition is skewed to polar residues. The bHLH domain maps to 191-241 (QATDRHSLAERARREKISKKMKYLQDIVPGCNKVTGKAGMLDEIINYVQCL).

As to quaternary structure, homodimer. Interacts with IBH1. As to expression, highly expressed in hypocotyls and cotyledons. Expressed in leaves, stems, and flowers.

Its subcellular location is the nucleus. Functionally, atypical bHLH transcription factor that acts as a positive regulator of cell elongation downstream of multiple external and endogenous signals by direct binding to the promoters and activation of the two expansin genes EXPA1 and EXPA8, encoding cell wall loosening enzymes. Transcriptional activity is inhibited when binding to the bHLH transcription factor IBH1. This Arabidopsis thaliana (Mouse-ear cress) protein is Transcription factor HBI1 (HBI1).